Consider the following 242-residue polypeptide: Ras-like protein family member 11A (242 aa).

Positions 17–241 (ESSSDYLLPK…SSKAKASSAL (225 aa)) are small GTPase-like. Residues 34-41 (GAGCVGKS), 81-88 (DTPGGIQA), and 147-150 (NKGD) contribute to the GTP site.

This sequence belongs to the small GTPase superfamily. Ras family. In terms of assembly, interacts with UBF/UBTF.

It localises to the nucleus. Its subcellular location is the nucleolus. It catalyses the reaction GTP + H2O = GDP + phosphate + H(+). Functionally, regulator of rDNA transcription. Acts in cooperation UBF/UBTF and positively regulates RNA polymerase I transcription. This chain is Ras-like protein family member 11A, found in Mus musculus (Mouse).